Reading from the N-terminus, the 404-residue chain is Chorismate synthase (404 aa).

An NADP(+)-binding site is contributed by R47. FMN contacts are provided by residues 156–158, 281–282, G321, 336–340, and R363; these read RSS, NA, and KPTST.

The protein belongs to the chorismate synthase family. Homotetramer. It depends on FMNH2 as a cofactor.

The enzyme catalyses 5-O-(1-carboxyvinyl)-3-phosphoshikimate = chorismate + phosphate. It functions in the pathway metabolic intermediate biosynthesis; chorismate biosynthesis; chorismate from D-erythrose 4-phosphate and phosphoenolpyruvate: step 7/7. Functionally, catalyzes the anti-1,4-elimination of the C-3 phosphate and the C-6 proR hydrogen from 5-enolpyruvylshikimate-3-phosphate (EPSP) to yield chorismate, which is the branch point compound that serves as the starting substrate for the three terminal pathways of aromatic amino acid biosynthesis. This reaction introduces a second double bond into the aromatic ring system. This chain is Chorismate synthase, found in Rhodopirellula baltica (strain DSM 10527 / NCIMB 13988 / SH1).